A 664-amino-acid chain; its full sequence is MAAAAAAPSPSFSKTLSSSSSKSSTLLPRSTFPFPHHPHKTTPPPLHLTPTHIHSQRRRFTISNVISTTQKVSETQKAETFVSRFAPDEPRKGSDVLVEALEREGVTDVFAYPGGASMEIHQALTRSSIIRNVLPRHEQGGVFAAEGYARATGFPGVCIATSGPGATNLVSGLADALLDSVPIVAITGQVPRRMIGTDAFQETPIVEVTRSITKHNYLVMDVEDIPRVVREAFFLARSGRPGPVLIDVPKDIQQQLVIPDWDQPMRLPGYMSRLPKLPNEMLLEQIVRLISESKKPVLYVGGGCSQSSEELRRFVELTGIPVASTLMGLGAFPTGDELSLSMLGMHGTVYANYAVDSSDLLLAFGVRFDDRVTGKLEAFASRAKIVHIDIDSAEIGKNKQPHVSICADIKLALQGLNSILESKEGKLKLDFSAWRQELTVQKVKYPLNFKTFGDAIPPQYAIQVLDELTNGSAIISTGVGQHQMWAAQYYKYRKPRQWLTSGGLGAMGFGLPAAIGAAVGRPDEVVVDIDGDGSFIMNVQELATIKVENLPVKIMLLNNQHLGMVVQWEDRFYKANRAHTYLGNPSNEAEIFPNMLKFAEACGVPAARVTHRDDLRAAIQKMLDTPGPYLLDVIVPHQEHVLPMIPSGGAFKDVITEGDGRSSY.

Positions 1–34 (MAAAAAAPSPSFSKTLSSSSSKSSTLLPRSTFPF) are enriched in low complexity. The segment at 1–51 (MAAAAAAPSPSFSKTLSSSSSKSSTLLPRSTFPFPHHPHKTTPPPLHLTPT) is disordered. A chloroplast-targeting transit peptide spans 1-91 (MAAAAAAPSP…VSRFAPDEPR (91 aa)). A thiamine diphosphate-binding site is contributed by E138. C158 and C304 are joined by a disulfide. Residues R240, 346 to 367 (HGTV…FGVR), and 389 to 408 (DIDS…ICAD) contribute to the FAD site. Positions 481 to 561 (QHQMWAAQYY…VKIMLLNNQH (81 aa)) are thiamine pyrophosphate binding. Mg(2+) contacts are provided by D532 and N559.

Belongs to the TPP enzyme family. Mg(2+) is required as a cofactor. Requires thiamine diphosphate as cofactor.

It localises to the plastid. Its subcellular location is the chloroplast. It carries out the reaction 2 pyruvate + H(+) = (2S)-2-acetolactate + CO2. It participates in amino-acid biosynthesis; L-isoleucine biosynthesis; L-isoleucine from 2-oxobutanoate: step 1/4. The protein operates within amino-acid biosynthesis; L-valine biosynthesis; L-valine from pyruvate: step 1/4. This chain is Acetolactate synthase 2, chloroplastic (ALS SURB), found in Nicotiana tabacum (Common tobacco).